The chain runs to 261 residues: MSDILDRIIAVKREEVAAAMRSAPLEALKLEASARDLRDFVGALRAKHAAGHAAVISEIKKASPSKGVLREHFVPADIARSYAEHGAACLSVLTDEQFFQGSVRYLEEARAACTLPVLRKDFIVDAYQIMEARAMGADAILLIAAALDTPLMQDLEAYAHSLGLAVLVEVHDRNEMEQALTLKTPLLGINNRNLRTFETSIQTTLDMLDMIPSDRIVVTESGILSRTDVDTMRAANVNTFLVGEAFMRADQPGEELARMFF.

The protein belongs to the TrpC family.

It catalyses the reaction 1-(2-carboxyphenylamino)-1-deoxy-D-ribulose 5-phosphate + H(+) = (1S,2R)-1-C-(indol-3-yl)glycerol 3-phosphate + CO2 + H2O. It participates in amino-acid biosynthesis; L-tryptophan biosynthesis; L-tryptophan from chorismate: step 4/5. The chain is Indole-3-glycerol phosphate synthase from Burkholderia lata (strain ATCC 17760 / DSM 23089 / LMG 22485 / NCIMB 9086 / R18194 / 383).